A 181-amino-acid chain; its full sequence is Oligoribonuclease (181 aa).

Positions 8-171 (LIWIDLEMTG…DDIRESIAEL (164 aa)) constitute an Exonuclease domain. Y129 is an active-site residue.

Belongs to the oligoribonuclease family.

It localises to the cytoplasm. In terms of biological role, 3'-to-5' exoribonuclease specific for small oligoribonucleotides. This is Oligoribonuclease from Vibrio vulnificus (strain CMCP6).